The sequence spans 374 residues: DNA integrity scanning protein DisA (374 aa).

Residues 20–158 (DGLMRASLSA…DGQRRVLEDS (139 aa)) enclose the DAC domain. ATP is bound by residues glycine 87, leucine 105, and 118–122 (TRHRT).

Belongs to the DisA family. Homooctamer. Interacts with RadA. Requires Mg(2+) as cofactor.

The catalysed reaction is 2 ATP = 3',3'-c-di-AMP + 2 diphosphate. Diadenylate cyclase activity is inhibited by the interaction with RadA. Functionally, participates in a DNA-damage check-point that is active prior to asymmetric division when DNA is damaged. DisA forms globular foci that rapidly scan along the chromosomes during sporulation, searching for lesions. When a lesion is present, DisA pauses at the lesion site. This triggers a cellular response that culminates in a temporary block in sporulation initiation. Its function is as follows. Also has diadenylate cyclase activity, catalyzing the condensation of 2 ATP molecules into cyclic di-AMP (c-di-AMP). c-di-AMP acts as a signaling molecule that couples DNA integrity with progression of sporulation. The rise in c-di-AMP level generated by DisA while scanning the chromosome, operates as a positive signal that advances sporulation; upon encountering a lesion, the DisA focus arrests at the damaged site and halts c-di-AMP synthesis. In Streptomyces coelicolor (strain ATCC BAA-471 / A3(2) / M145), this protein is DNA integrity scanning protein DisA.